Consider the following 508-residue polypeptide: Photosystem II CP47 reaction center protein (508 aa).

6 helical membrane-spanning segments follow: residues Ser-21–Ser-36, Ile-101–Trp-115, Gly-140–Phe-156, Ile-203–Ser-218, Val-237–Val-252, and Ser-457–Arg-472.

It belongs to the PsbB/PsbC family. PsbB subfamily. As to quaternary structure, PSII is composed of 1 copy each of membrane proteins PsbA, PsbB, PsbC, PsbD, PsbE, PsbF, PsbH, PsbI, PsbJ, PsbK, PsbL, PsbM, PsbT, PsbX, PsbY, PsbZ, Psb30/Ycf12, at least 3 peripheral proteins of the oxygen-evolving complex and a large number of cofactors. It forms dimeric complexes. The cofactor is Binds multiple chlorophylls. PSII binds additional chlorophylls, carotenoids and specific lipids..

The protein resides in the plastid. It is found in the chloroplast thylakoid membrane. One of the components of the core complex of photosystem II (PSII). It binds chlorophyll and helps catalyze the primary light-induced photochemical processes of PSII. PSII is a light-driven water:plastoquinone oxidoreductase, using light energy to abstract electrons from H(2)O, generating O(2) and a proton gradient subsequently used for ATP formation. In Pelargonium hortorum (Common geranium), this protein is Photosystem II CP47 reaction center protein.